Consider the following 536-residue polypeptide: MDTLFMTTVTATPAIKEDRILILDFGSQYSQLIARRVRDSGVFCEMFPYDIDTQRITDFGAKGIILSGGPESVHAENSPRINDAVFELGVPVLGICYGMQAMAERFGGKVHASDIHEFGAATINIDGKSTLTNGIEDAAAKLNVWMSHGDKVVDAPQGFDIVASTPSCPIAIMADDSRHYYGLQFHPEVTHTAQGQALLGRFVHEICDCAGSWTPDNIIDMRIEQLKKQIGDKQVLLGLSGGVDSSVVAALLHKAIGDQLTCVFVDTGLLRLHEGDQVMQIFAENMGVKVIRVDAEELFLTALAGESDPEAKRKIIGKTFIDVFANSAREISEQSDGKVIEFLAQGTIYPDVIESAKSHQGKAHVIKSHHNVGGLPDDLAFELVEPLRDLFKDEVRKLGITLGLPAKMINRHPFPGPGLGVRILGEVTKEFADILRSADAIFMEELEKSGWYEKTAQAFAVFQPIKSVGVVGDGRRYAWVIALRAVETVDFMTARFAHLPYDLIETVSNRIMNEIAEVSRVTYDVSSKPPATIEWE.

The 194-residue stretch at 19–212 (RILILDFGSQ…VHEICDCAGS (194 aa)) folds into the Glutamine amidotransferase type-1 domain. Residue Cys96 is the Nucleophile of the active site. Catalysis depends on residues His186 and Glu188. A GMPS ATP-PPase domain is found at 213–411 (WTPDNIIDMR…LGLPAKMINR (199 aa)). An ATP-binding site is contributed by 240 to 246 (SGGVDSS).

In terms of assembly, homodimer.

The catalysed reaction is XMP + L-glutamine + ATP + H2O = GMP + L-glutamate + AMP + diphosphate + 2 H(+). Its pathway is purine metabolism; GMP biosynthesis; GMP from XMP (L-Gln route): step 1/1. In terms of biological role, catalyzes the synthesis of GMP from XMP. In Psychrobacter arcticus (strain DSM 17307 / VKM B-2377 / 273-4), this protein is GMP synthase [glutamine-hydrolyzing].